The chain runs to 201 residues: Recombination protein RecR (201 aa).

The C4-type zinc-finger motif lies at 60 to 75 (CHACGNVDTSDPCTIC). The 96-residue stretch at 83–178 (TTLVVVEDVS…TITRLAHGVP (96 aa)) folds into the Toprim domain.

The protein belongs to the RecR family.

May play a role in DNA repair. It seems to be involved in an RecBC-independent recombinational process of DNA repair. It may act with RecF and RecO. This Methylorubrum populi (strain ATCC BAA-705 / NCIMB 13946 / BJ001) (Methylobacterium populi) protein is Recombination protein RecR.